The primary structure comprises 448 residues: MEIDKELTPKQIVEELNKYIVGQYEAKKAVAVALRNRWRRQKLPEDLRDEVIPKNILMIGPTGVGKTEIARRLANLVKAPFIKVEATKFTEVGYVGRDVESIIRELVDVSFKMVKAEKMEEVREKAKAIAEEKILDYLVPKKPKRYGTLIEEEEESPAREKFREMLKNGQLDDKVVEIDVEEKVSAVVGGVVVPGLEDIESQLKELFSNLGPSKRKKRRLTVKEALKIIENEEAEKLIDMDEVQTLAVKRAENLGIVFIDEIDKVAARGSSKSGPDVSREGVQRDLLPIVEGTVVSTKYGPVKTDHILFIAAGAFHLAKPSDLIPELQGRFPIRVELKALTKDDFVKILTEPKNALIKQYIALMSTEGVELEFTEDAIQEIAQIAEEVNERTENIGARRLHTILERIMEDYSFNAPDLKGQKIVIDSKLVREKLGNVITNEDLTRYIL.

ATP-binding positions include Val21, 63-68, Asp260, Glu326, and Arg398; that span reads GVGKTE.

Belongs to the ClpX chaperone family. HslU subfamily. A double ring-shaped homohexamer of HslV is capped on each side by a ring-shaped HslU homohexamer. The assembly of the HslU/HslV complex is dependent on binding of ATP.

It is found in the cytoplasm. Its function is as follows. ATPase subunit of a proteasome-like degradation complex; this subunit has chaperone activity. The binding of ATP and its subsequent hydrolysis by HslU are essential for unfolding of protein substrates subsequently hydrolyzed by HslV. HslU recognizes the N-terminal part of its protein substrates and unfolds these before they are guided to HslV for hydrolysis. The protein is ATP-dependent protease ATPase subunit HslU of Sulfurihydrogenibium sp. (strain YO3AOP1).